Here is a 659-residue protein sequence, read N- to C-terminus: Protein phosphatase Slingshot homolog 3 (659 aa).

Residues M1–S16 show a composition bias toward polar residues. The tract at residues M1–R31 is disordered. N-acetylalanine is present on A2. Residues S9 and S37 each carry the phosphoserine modification. The disordered stretch occupies residues L46–Q96. Residues P64 to Q78 show a composition bias toward basic and acidic residues. Positions D80–Q89 are enriched in polar residues. 2 positions are modified to phosphoserine: S85 and S87. The 56-residue stretch at E269–A324 folds into the DEK-C domain. In terms of domain architecture, Tyrosine-protein phosphatase spans R328–A469. C413 (phosphocysteine intermediate) is an active-site residue. 3 disordered regions span residues G482 to L534, S547 to V603, and Q617 to T638. Residues S547–S557 show a composition bias toward low complexity.

It belongs to the protein-tyrosine phosphatase family. Does not bind to, or colocalize with, filamentous actin.

The protein resides in the cytoplasm. Its subcellular location is the cytoskeleton. It localises to the nucleus. The catalysed reaction is O-phospho-L-tyrosyl-[protein] + H2O = L-tyrosyl-[protein] + phosphate. It carries out the reaction O-phospho-L-seryl-[protein] + H2O = L-seryl-[protein] + phosphate. It catalyses the reaction O-phospho-L-threonyl-[protein] + H2O = L-threonyl-[protein] + phosphate. Its function is as follows. Protein phosphatase which may play a role in the regulation of actin filament dynamics. Can dephosphorylate and activate the actin binding/depolymerizing factor cofilin, which subsequently binds to actin filaments and stimulates their disassembly. This chain is Protein phosphatase Slingshot homolog 3 (SSH3), found in Homo sapiens (Human).